Reading from the N-terminus, the 297-residue chain is Myozenin-1 (297 aa).

The disordered stretch occupies residues Met1–Leu34. The residue at position 82 (Ser82) is a Phosphoserine. Residues Phe105 to Glu172 are disordered. Positions Arg118–Asp128 are enriched in low complexity. The segment covering Ser136–Gly162 has biased composition (gly residues).

This sequence belongs to the myozenin family. As to quaternary structure, interacts with ACTN2, ACTN3, FLNA, FLNB, FLNC, LDB3, PPP3CA and TCAP. Interacts via its C-terminal region with MYOT.

It is found in the nucleus. The protein resides in the cell projection. Its subcellular location is the pseudopodium. In terms of biological role, myozenins may serve as intracellular binding proteins involved in linking Z-disk proteins such as alpha-actinin, gamma-filamin, TCAP/telethonin, LDB3/ZASP and localizing calcineurin signaling to the sarcomere. Plays an important role in the modulation of calcineurin signaling. May play a role in myofibrillogenesis. The chain is Myozenin-1 (MYOZ1) from Bos taurus (Bovine).